The sequence spans 257 residues: Imidazole glycerol phosphate synthase subunit HisF (257 aa).

Catalysis depends on residues Asp-11 and Asp-130.

The protein belongs to the HisA/HisF family. As to quaternary structure, heterodimer of HisH and HisF.

It localises to the cytoplasm. It catalyses the reaction 5-[(5-phospho-1-deoxy-D-ribulos-1-ylimino)methylamino]-1-(5-phospho-beta-D-ribosyl)imidazole-4-carboxamide + L-glutamine = D-erythro-1-(imidazol-4-yl)glycerol 3-phosphate + 5-amino-1-(5-phospho-beta-D-ribosyl)imidazole-4-carboxamide + L-glutamate + H(+). Its pathway is amino-acid biosynthesis; L-histidine biosynthesis; L-histidine from 5-phospho-alpha-D-ribose 1-diphosphate: step 5/9. IGPS catalyzes the conversion of PRFAR and glutamine to IGP, AICAR and glutamate. The HisF subunit catalyzes the cyclization activity that produces IGP and AICAR from PRFAR using the ammonia provided by the HisH subunit. The polypeptide is Imidazole glycerol phosphate synthase subunit HisF (Shewanella putrefaciens (strain CN-32 / ATCC BAA-453)).